We begin with the raw amino-acid sequence, 61 residues long: Small ribosomal subunit protein uS14B (61 aa).

The Zn(2+) site is built by Cys-24, Cys-27, Cys-40, and Cys-43.

Belongs to the universal ribosomal protein uS14 family. Zinc-binding uS14 subfamily. Part of the 30S ribosomal subunit. Contacts proteins S3 and S10. It depends on Zn(2+) as a cofactor.

In terms of biological role, binds 16S rRNA, required for the assembly of 30S particles and may also be responsible for determining the conformation of the 16S rRNA at the A site. This chain is Small ribosomal subunit protein uS14B, found in Bacillus velezensis (strain DSM 23117 / BGSC 10A6 / LMG 26770 / FZB42) (Bacillus amyloliquefaciens subsp. plantarum).